The chain runs to 239 residues: Transcriptional regulatory protein DcuR (239 aa).

The Response regulatory domain occupies 3–121 (NVLIIDDDAM…RFEEALTGWR (119 aa)). 4-aspartylphosphate is present on D56. A DNA-binding region (H-T-H motif) is located at residues 181-200 (TDELANEVNISRVSCRKYLI).

Phosphorylated and activated by DcuS.

The protein resides in the cytoplasm. Its function is as follows. Member of the two-component regulatory system DcuR/DcuS. Involved in the C4-dicarboxylate-stimulated regulation of the genes encoding the anaerobic fumarate respiratory system (frdABCD; nuoAN; dcuB; dcuC; sdhCDAB; etc.). Weakly regulates the aerobic C4-dicarboxylate transporter dctA. The chain is Transcriptional regulatory protein DcuR (dcuR) from Escherichia coli O6:H1 (strain CFT073 / ATCC 700928 / UPEC).